The primary structure comprises 96 residues: Aspartyl/glutamyl-tRNA(Asn/Gln) amidotransferase subunit C (96 aa).

The protein belongs to the GatC family. As to quaternary structure, heterotrimer of A, B and C subunits.

The enzyme catalyses L-glutamyl-tRNA(Gln) + L-glutamine + ATP + H2O = L-glutaminyl-tRNA(Gln) + L-glutamate + ADP + phosphate + H(+). The catalysed reaction is L-aspartyl-tRNA(Asn) + L-glutamine + ATP + H2O = L-asparaginyl-tRNA(Asn) + L-glutamate + ADP + phosphate + 2 H(+). Allows the formation of correctly charged Asn-tRNA(Asn) or Gln-tRNA(Gln) through the transamidation of misacylated Asp-tRNA(Asn) or Glu-tRNA(Gln) in organisms which lack either or both of asparaginyl-tRNA or glutaminyl-tRNA synthetases. The reaction takes place in the presence of glutamine and ATP through an activated phospho-Asp-tRNA(Asn) or phospho-Glu-tRNA(Gln). This is Aspartyl/glutamyl-tRNA(Asn/Gln) amidotransferase subunit C from Sulfurovum sp. (strain NBC37-1).